A 90-amino-acid polypeptide reads, in one-letter code: High mobility group nucleosome-binding domain-containing protein 4 (90 aa).

Residues 1–90 form a disordered region; that stretch reads MPKRKAKGDA…QKAEGTGDAK (90 aa). Residues 7–23 are compositionally biased toward basic and acidic residues; that stretch reads KGDAKGDKGKVKDEPQR. S29 carries the post-translational modification ADP-ribosylserine. A compositionally biased stretch (basic and acidic residues) spans 37 to 64; the sequence is PEPRPKKAPAKKGEKLAKGRKGKAEVSK. A compositionally biased stretch (polar residues) spans 65–83; sequence DGNNPAKNRDASTVQSQKA. The residue at position 80 (S80) is a Phosphoserine. At K82 the chain carries N6-acetyllysine.

It belongs to the HMGN family.

It is found in the nucleus. This chain is High mobility group nucleosome-binding domain-containing protein 4 (HMGN4), found in Bos taurus (Bovine).